The chain runs to 447 residues: Glucose-6-phosphate isomerase (447 aa).

Glutamate 288 (proton donor) is an active-site residue. Active-site residues include histidine 309 and lysine 423.

Belongs to the GPI family.

Its subcellular location is the cytoplasm. It catalyses the reaction alpha-D-glucose 6-phosphate = beta-D-fructose 6-phosphate. It functions in the pathway carbohydrate biosynthesis; gluconeogenesis. The protein operates within carbohydrate degradation; glycolysis; D-glyceraldehyde 3-phosphate and glycerone phosphate from D-glucose: step 2/4. Its function is as follows. Catalyzes the reversible isomerization of glucose-6-phosphate to fructose-6-phosphate. The sequence is that of Glucose-6-phosphate isomerase from Lactobacillus johnsonii (strain CNCM I-12250 / La1 / NCC 533).